A 160-amino-acid chain; its full sequence is Peptide methionine sulfoxide reductase MsrA (160 aa).

The active site involves Cys-11.

It belongs to the MsrA Met sulfoxide reductase family.

It carries out the reaction L-methionyl-[protein] + [thioredoxin]-disulfide + H2O = L-methionyl-(S)-S-oxide-[protein] + [thioredoxin]-dithiol. The enzyme catalyses [thioredoxin]-disulfide + L-methionine + H2O = L-methionine (S)-S-oxide + [thioredoxin]-dithiol. Has an important function as a repair enzyme for proteins that have been inactivated by oxidation. Catalyzes the reversible oxidation-reduction of methionine sulfoxide in proteins to methionine. In Malacoplasma penetrans (strain HF-2) (Mycoplasma penetrans), this protein is Peptide methionine sulfoxide reductase MsrA.